The following is a 230-amino-acid chain: Demethylmenaquinone methyltransferase (230 aa).

Residues threonine 62, aspartate 80, 100–101, and serine 117 contribute to the S-adenosyl-L-methionine site; that span reads DG.

This sequence belongs to the class I-like SAM-binding methyltransferase superfamily. MenG/UbiE family.

The enzyme catalyses a 2-demethylmenaquinol + S-adenosyl-L-methionine = a menaquinol + S-adenosyl-L-homocysteine + H(+). It functions in the pathway quinol/quinone metabolism; menaquinone biosynthesis; menaquinol from 1,4-dihydroxy-2-naphthoate: step 2/2. Methyltransferase required for the conversion of demethylmenaquinol (DMKH2) to menaquinol (MKH2). This Corynebacterium glutamicum (strain R) protein is Demethylmenaquinone methyltransferase.